Consider the following 279-residue polypeptide: Thymidylate synthase (279 aa).

141 to 142 (RR) serves as a coordination point for dUMP. The active-site Nucleophile is Cys-161. DUMP contacts are provided by residues 181-184 (RSND), Asn-192, and 222-224 (HVY). Asp-184 lines the (6R)-5,10-methylene-5,6,7,8-tetrahydrofolate pocket. Position 278 (Ala-278) interacts with (6R)-5,10-methylene-5,6,7,8-tetrahydrofolate.

The protein belongs to the thymidylate synthase family. Bacterial-type ThyA subfamily. Homodimer.

The protein resides in the cytoplasm. The enzyme catalyses dUMP + (6R)-5,10-methylene-5,6,7,8-tetrahydrofolate = 7,8-dihydrofolate + dTMP. It functions in the pathway pyrimidine metabolism; dTTP biosynthesis. Functionally, catalyzes the reductive methylation of 2'-deoxyuridine-5'-monophosphate (dUMP) to 2'-deoxythymidine-5'-monophosphate (dTMP) while utilizing 5,10-methylenetetrahydrofolate (mTHF) as the methyl donor and reductant in the reaction, yielding dihydrofolate (DHF) as a by-product. This enzymatic reaction provides an intracellular de novo source of dTMP, an essential precursor for DNA biosynthesis. The chain is Thymidylate synthase from Bacillus subtilis subsp. natto.